The sequence spans 352 residues: C-C chemokine receptor type 5 (352 aa).

The Extracellular portion of the chain corresponds to 1 to 30 (MDYQVSSPTYDIDYYTSEPCQKVNVKQIAA). Tyrosine 3 carries the sulfotyrosine modification. O-linked (GalNAc...) serine glycosylation is found at serine 6 and serine 7. Sulfotyrosine is present on residues tyrosine 10, tyrosine 14, and tyrosine 15. 2 disulfide bridges follow: cysteine 20–cysteine 269 and cysteine 101–cysteine 178. Residues 31-58 (RLLPPLYSLVFIFGFVGNILVVLILINC) form a helical membrane-spanning segment. At 59-68 (KRLKSMTDIY) the chain is on the cytoplasmic side. Residues 69–89 (LLNLAISDLFFLLTVPFWAHY) traverse the membrane as a helical segment. Over 90–102 (AAAQWDFGNTMCQ) the chain is Extracellular. Residues 103–124 (LLTGLYFIGFFSGIFFIILLTI) form a helical membrane-spanning segment. The Cytoplasmic portion of the chain corresponds to 125-141 (DRYLAIVHAVFALKART). Residues 142–166 (VTFGVVTSVITWVVAVFASLPGIIF) form a helical membrane-spanning segment. The Extracellular portion of the chain corresponds to 167 to 198 (TRSQREGLHYTCSSHFPYSQYQFWKNFQTLKI). Residues 199–218 (VILGLVLPLLVMVICYSGIL) form a helical membrane-spanning segment. Topologically, residues 219–235 (KTLLRCRNEKKRHRAVR) are cytoplasmic. A helical membrane pass occupies residues 236–260 (LIFTIMIVYFLFWAPYNIVLLLNTF). The Extracellular segment spans residues 261 to 277 (QEFFGLNNCSSSNRLDQ). The chain crosses the membrane as a helical span at residues 278–301 (AMQVTETLGMTHCCINPIIYAFVG). Residues 302–352 (EKFRNYLLVFFQKHIAKRFCKCCYIFQQEAPERASSVYTRSTGEQEISVGL) lie on the Cytoplasmic side of the membrane. S-palmitoyl cysteine attachment occurs at residues cysteine 321, cysteine 323, and cysteine 324. Phosphoserine; by BARK1 is present on residues serine 336, serine 337, serine 342, and serine 349.

Belongs to the G-protein coupled receptor 1 family. In terms of assembly, interacts with PRAF2. Efficient ligand binding to CCL3/MIP-1alpha and CCL4/MIP-1beta requires sulfation, O-glycosylation and sialic acid modifications. Glycosylation on Ser-6 is required for efficient binding of CCL4. Interacts with GRK2. Interacts with ARRB1 and ARRB2. Interacts with CNIH4. Interacts with S100A4; this interaction stimulates T-lymphocyte chemotaxis. In terms of processing, sulfated on at least 2 of the N-terminal tyrosines. Sulfation is required for efficient binding of the chemokines, CCL3 and CCL4. Post-translationally, palmitoylation in the C-terminal is important for cell surface expression. Phosphorylation on serine residues in the C-terminal is stimulated by binding CC chemokines especially by APO-RANTES. In terms of processing, O-glycosylated, but not N-glycosylated. Ser-6 appears to be the major site even if Ser-7 may be also O-glycosylated. Also sialylated glycans present which contribute to chemokine binding. Thr-16 and Ser-17 may also be glycosylated and, if so, with small moieties such as a T-antigen.

The protein localises to the cell membrane. Receptor for a number of inflammatory CC-chemokines including CCL3/MIP-1-alpha, CCL4/MIP-1-beta and RANTES and subsequently transduces a signal by increasing the intracellular calcium ion level. May play a role in the control of granulocytic lineage proliferation or differentiation. Participates in T-lymphocyte migration to the infection site by acting as a chemotactic receptor. The chain is C-C chemokine receptor type 5 (CCR5) from Rhinopithecus bieti (Black snub-nosed monkey).